The chain runs to 129 residues: Ribosome-binding factor A (129 aa).

The protein belongs to the RbfA family. In terms of assembly, monomer. Binds 30S ribosomal subunits, but not 50S ribosomal subunits or 70S ribosomes.

It localises to the cytoplasm. Its function is as follows. One of several proteins that assist in the late maturation steps of the functional core of the 30S ribosomal subunit. Associates with free 30S ribosomal subunits (but not with 30S subunits that are part of 70S ribosomes or polysomes). Required for efficient processing of 16S rRNA. May interact with the 5'-terminal helix region of 16S rRNA. In Thermomicrobium roseum (strain ATCC 27502 / DSM 5159 / P-2), this protein is Ribosome-binding factor A.